A 199-amino-acid polypeptide reads, in one-letter code: 7-methyl-GTP pyrophosphatase (199 aa).

Asp-76 (proton acceptor) is an active-site residue.

Belongs to the Maf family. YceF subfamily. It depends on a divalent metal cation as a cofactor.

It localises to the cytoplasm. It carries out the reaction N(7)-methyl-GTP + H2O = N(7)-methyl-GMP + diphosphate + H(+). Its function is as follows. Nucleoside triphosphate pyrophosphatase that hydrolyzes 7-methyl-GTP (m(7)GTP). May have a dual role in cell division arrest and in preventing the incorporation of modified nucleotides into cellular nucleic acids. The protein is 7-methyl-GTP pyrophosphatase of Mesorhizobium japonicum (strain LMG 29417 / CECT 9101 / MAFF 303099) (Mesorhizobium loti (strain MAFF 303099)).